The primary structure comprises 152 residues: Transcriptional repressor NrdR (152 aa).

A zinc finger lies at 3–34; the sequence is CPFCNHGELKVIDSRNSPEANAIKRRRECLRC. The ATP-cone domain occupies 48-138; sequence IQVLKRDGRY…VYRRFRDVGE (91 aa).

The protein belongs to the NrdR family. Requires Zn(2+) as cofactor.

In terms of biological role, negatively regulates transcription of bacterial ribonucleotide reductase nrd genes and operons by binding to NrdR-boxes. This Chlamydia muridarum (strain MoPn / Nigg) protein is Transcriptional repressor NrdR.